Reading from the N-terminus, the 477-residue chain is Protoporphyrinogen oxidase (477 aa).

Residues 9–14 (GGGISG), 34–35 (ES), tryptophan 42, 57–60 (GPRG), valine 257, alanine 449, and 454–456 (VAV) each bind FAD.

Belongs to the protoporphyrinogen/coproporphyrinogen oxidase family. Protoporphyrinogen oxidase subfamily. Monomer. Homodimer. It depends on FAD as a cofactor. As to expression, expressed in heart, brain, placenta, lung, liver, skeletal muscle, kidney and pancreas.

It localises to the mitochondrion inner membrane. The enzyme catalyses protoporphyrinogen IX + 3 O2 = protoporphyrin IX + 3 H2O2. Its pathway is porphyrin-containing compound metabolism; protoporphyrin-IX biosynthesis; protoporphyrin-IX from protoporphyrinogen-IX: step 1/1. Functionally, catalyzes the 6-electron oxidation of protoporphyrinogen-IX to form protoporphyrin-IX. The chain is Protoporphyrinogen oxidase (PPOX) from Homo sapiens (Human).